The following is a 207-amino-acid chain: Small ribosomal subunit protein uS4A (207 aa).

The S4 RNA-binding domain maps to 98-158; that stretch reads TRLDNVAYRL…EKSKSSAKFK (61 aa).

The protein belongs to the universal ribosomal protein uS4 family. Part of the 30S ribosomal subunit. Contacts protein S5. The interaction surface between S4 and S5 is involved in control of translational fidelity.

Its function is as follows. One of the primary rRNA binding proteins, it binds directly to 16S rRNA where it nucleates assembly of the body of the 30S subunit. Functionally, with S5 and S12 plays an important role in translational accuracy. The chain is Small ribosomal subunit protein uS4A from Alkaliphilus oremlandii (strain OhILAs) (Clostridium oremlandii (strain OhILAs)).